The sequence spans 383 residues: Sphingosine kinase 1 (383 aa).

Residues 12–159 (PRPCRVLVLL…MNLLSLHTAS (148 aa)) enclose the DAGKc domain. ATP contacts are provided by residues 22–24 (NPR) and 54–58 (TERQN). 79–82 (SGDG) contacts substrate. The active-site Proton donor/acceptor is D81. Residues E86 and 111 to 113 (GSG) each bind ATP. 2 short sequence motifs (nuclear export signal) span residues 147–155 (LSPMNLLSL) and 161–169 (RQLYSVLSL). D178 serves as a coordination point for substrate. The ATP site is built by R185 and R191. The residue at position 193 (T193) is a Phosphothreonine. Residue S225 is modified to Phosphoserine. 340–342 (DGE) lines the ATP pocket. A disordered region spans residues 363-383 (GSSDSPSGRDSQRRPPPEEPI). Residues 372-383 (DSQRRPPPEEPI) show a composition bias toward basic and acidic residues.

In terms of assembly, interacts with ACY1. Binds to calmodulin. Interacts with SPHKAP. Interacts with CIB1, the interaction occurs in a calcium-dependent manner. Interacts with TRAF2. Interacts with EEF1A1; the interaction enhances SPHK1 kinase activity. Requires Mg(2+) as cofactor. Expressed in microglia (at protein level).

It is found in the cytoplasm. It localises to the nucleus. Its subcellular location is the cell membrane. The protein localises to the endosome membrane. The protein resides in the membrane. It is found in the clathrin-coated pit. It localises to the synapse. It carries out the reaction a sphingoid base + ATP = a sphingoid 1-phosphate + ADP + H(+). It catalyses the reaction L-seryl-[protein] + acetyl-CoA = O-acetyl-L-seryl-[protein] + CoA. The enzyme catalyses sphinganine + ATP = sphinganine 1-phosphate + ADP + H(+). The catalysed reaction is sphing-4-enine + ATP = sphing-4-enine 1-phosphate + ADP + H(+). It carries out the reaction 1-O-hexadecyl-2-amino-sn-glycerol + ATP = 1-O-hexadecyl-2-desoxy-2-amino-sn-glycero-3-phosphate + ADP + H(+). With respect to regulation, acetyltransferase activity increases in presence of the kinase substrate, sphingosine. In Purkinje cells, kinase activity on sphingosine increases in presence of VEGFA. In neurons, kinase activity increases during the first 24h in presence of Amyloid-beta protein 42 to decrease after 96h. In terms of biological role, catalyzes the phosphorylation of sphingosine to form sphingosine 1-phosphate (SPP), a lipid mediator with both intra- and extracellular functions. Also acts on D-erythro-sphingosine and to a lesser extent sphinganine, but not other lipids, such as D,L-threo-dihydrosphingosine, N,N-dimethylsphingosine, diacylglycerol, ceramide, or phosphatidylinositol. In contrast to proapoptotic SPHK2, has a negative effect on intracellular ceramide levels, enhances cell growth and inhibits apoptosis. Involved in the regulation of inflammatory response and neuroinflammation. Via the product sphingosine 1-phosphate, stimulates TRAF2 E3 ubiquitin ligase activity, and promotes activation of NF-kappa-B in response to TNF signaling leading to IL17 secretion. In response to TNF and in parallel to NF-kappa-B activation, negatively regulates RANTES induction through p38 MAPK signaling pathway. Involved in endocytic membrane trafficking induced by sphingosine, recruited to dilate endosomes, also plays a role on later stages of endosomal maturation and membrane fusion independently of its kinase activity. In Purkinje cells, seems to be also involved in the regulation of autophagosome-lysosome fusion upon VEGFA. Has serine acetyltransferase activity on PTGS2/COX2 in an acetyl-CoA dependent manner. The acetyltransferase activity increases in presence of the kinase substrate, sphingosine. During neuroinflammation, through PTGS2 acetylation, promotes neuronal secretion of specialized preresolving mediators (SPMs), especially 15-R-lipoxin A4, which results in an increase of phagocytic microglia. The polypeptide is Sphingosine kinase 1 (Sphk1) (Rattus norvegicus (Rat)).